The primary structure comprises 492 residues: N-succinylglutamate 5-semialdehyde dehydrogenase (492 aa).

Residue G220 to G225 coordinates NAD(+). Residues E243 and C277 contribute to the active site.

Belongs to the aldehyde dehydrogenase family. AstD subfamily.

It catalyses the reaction N-succinyl-L-glutamate 5-semialdehyde + NAD(+) + H2O = N-succinyl-L-glutamate + NADH + 2 H(+). The protein operates within amino-acid degradation; L-arginine degradation via AST pathway; L-glutamate and succinate from L-arginine: step 4/5. Catalyzes the NAD-dependent reduction of succinylglutamate semialdehyde into succinylglutamate. This is N-succinylglutamate 5-semialdehyde dehydrogenase from Escherichia coli (strain SE11).